The chain runs to 293 residues: Formamidopyrimidine-DNA glycosylase (293 aa).

Residue proline 2 is the Schiff-base intermediate with DNA of the active site. The active-site Proton donor is the glutamate 3. The active-site Proton donor; for beta-elimination activity is the lysine 58. DNA contacts are provided by histidine 104, arginine 127, and arginine 170. The FPG-type zinc finger occupies 257–293; the sequence is SVYGREGKPCRNPACGGTVERVVQSGRSTFFCASCQT. Arginine 283 (proton donor; for delta-elimination activity) is an active-site residue.

This sequence belongs to the FPG family. In terms of assembly, monomer. The cofactor is Zn(2+).

The enzyme catalyses Hydrolysis of DNA containing ring-opened 7-methylguanine residues, releasing 2,6-diamino-4-hydroxy-5-(N-methyl)formamidopyrimidine.. It catalyses the reaction 2'-deoxyribonucleotide-(2'-deoxyribose 5'-phosphate)-2'-deoxyribonucleotide-DNA = a 3'-end 2'-deoxyribonucleotide-(2,3-dehydro-2,3-deoxyribose 5'-phosphate)-DNA + a 5'-end 5'-phospho-2'-deoxyribonucleoside-DNA + H(+). Its function is as follows. Involved in base excision repair of DNA damaged by oxidation or by mutagenic agents. Acts as a DNA glycosylase that recognizes and removes damaged bases. Has a preference for oxidized purines, such as 7,8-dihydro-8-oxoguanine (8-oxoG). Has AP (apurinic/apyrimidinic) lyase activity and introduces nicks in the DNA strand. Cleaves the DNA backbone by beta-delta elimination to generate a single-strand break at the site of the removed base with both 3'- and 5'-phosphates. The chain is Formamidopyrimidine-DNA glycosylase from Brucella canis (strain ATCC 23365 / NCTC 10854 / RM-666).